Consider the following 498-residue polypeptide: ATP synthase subunit beta, chloroplastic (498 aa).

172 to 179 (GGAGVGKT) serves as a coordination point for ATP.

This sequence belongs to the ATPase alpha/beta chains family. F-type ATPases have 2 components, CF(1) - the catalytic core - and CF(0) - the membrane proton channel. CF(1) has five subunits: alpha(3), beta(3), gamma(1), delta(1), epsilon(1). CF(0) has four main subunits: a(1), b(1), b'(1) and c(9-12).

It localises to the plastid. It is found in the chloroplast thylakoid membrane. It catalyses the reaction ATP + H2O + 4 H(+)(in) = ADP + phosphate + 5 H(+)(out). Functionally, produces ATP from ADP in the presence of a proton gradient across the membrane. The catalytic sites are hosted primarily by the beta subunits. This is ATP synthase subunit beta, chloroplastic from Oryza nivara (Indian wild rice).